The sequence spans 565 residues: Oxygen-dependent choline dehydrogenase (565 aa).

6–35 (DYIIVGAGSAGNTLATRLTEDAGVTVLLLE) lines the FAD pocket. H475 acts as the Proton acceptor in catalysis.

Belongs to the GMC oxidoreductase family. The cofactor is FAD.

It catalyses the reaction choline + A = betaine aldehyde + AH2. The enzyme catalyses betaine aldehyde + NAD(+) + H2O = glycine betaine + NADH + 2 H(+). It participates in amine and polyamine biosynthesis; betaine biosynthesis via choline pathway; betaine aldehyde from choline (cytochrome c reductase route): step 1/1. Its function is as follows. Involved in the biosynthesis of the osmoprotectant glycine betaine. Catalyzes the oxidation of choline to betaine aldehyde and betaine aldehyde to glycine betaine at the same rate. This chain is Oxygen-dependent choline dehydrogenase, found in Pseudomonas putida (strain GB-1).